We begin with the raw amino-acid sequence, 468 residues long: MRIEHDFIGQMEISDEVYYGIQTLRASENFFITNDKLCSYPVFIKSFAQVKKAATLANVQLGLIDEKLKIAICHACDLLIDGKYHDQFIVDMIQGGAGTSTNMNMNEVIANLALEYMGHQKGEYQFCHPNDHVNRSQSTNDAYPSALKIAIYERLSNLVAPMKALRDAFAQKAKEFAHVIKMGRTQLQDAVPMTLGQEFETYALMVDRDIEQVLDARNWVRELNLGGTAIGTGINSHPDYRSLIEKKIQEVTGRPFVMANNLIEATQSTGAYVQVSGVLKRIAVKLSKVCNDLRLLSSGPRAGLNEINLPKMQPGSSIMPGKVNPVIPEVVNQVCFAVIGNDLSVALAAEGGQLQLNVFEPVIAYKLFHSFVILGRAIETLTTKCVEGITANEKICHDYVFNSIGIVTALNPHIGYEKSAMIAKEALKSDRSIYDIALEKKILTKEQLDDIFKPENMLSPHAFKKHKD.

L-aspartate-binding residues include T99, S138, T139, N140, and T185. Residues 315-324 form an SS loop region; it reads GSSIMPGKVN. S316 acts as the Proton acceptor in catalysis. S317 and K322 together coordinate L-aspartate.

The protein belongs to the class-II fumarase/aspartase family. Aspartase subfamily. Homotetramer.

The enzyme catalyses L-aspartate = fumarate + NH4(+). Its function is as follows. Catalyzes the reversible conversion of L-aspartate to fumarate and ammonia. In Helicobacter pylori (strain ATCC 700392 / 26695) (Campylobacter pylori), this protein is Aspartate ammonia-lyase (aspA).